The chain runs to 135 residues: Universal stress protein Aq_178 (135 aa).

Belongs to the universal stress protein A family.

The sequence is that of Universal stress protein Aq_178 from Aquifex aeolicus (strain VF5).